The chain runs to 51 residues: uncharacterized protein (51 aa).

A helical transmembrane segment spans residues 20–42 (NFFSRMWNAVVFGFGAAIGASVA).

The protein localises to the membrane. This is an uncharacterized protein from Schizosaccharomyces pombe (strain 972 / ATCC 24843) (Fission yeast).